The sequence spans 95 residues: Aspartyl/glutamyl-tRNA(Asn/Gln) amidotransferase subunit C (95 aa).

The tract at residues 74–95 (GQALEPAPDADNEHFLVPQVVE) is disordered.

It belongs to the GatC family. Heterotrimer of A, B and C subunits.

It carries out the reaction L-glutamyl-tRNA(Gln) + L-glutamine + ATP + H2O = L-glutaminyl-tRNA(Gln) + L-glutamate + ADP + phosphate + H(+). It catalyses the reaction L-aspartyl-tRNA(Asn) + L-glutamine + ATP + H2O = L-asparaginyl-tRNA(Asn) + L-glutamate + ADP + phosphate + 2 H(+). Allows the formation of correctly charged Asn-tRNA(Asn) or Gln-tRNA(Gln) through the transamidation of misacylated Asp-tRNA(Asn) or Glu-tRNA(Gln) in organisms which lack either or both of asparaginyl-tRNA or glutaminyl-tRNA synthetases. The reaction takes place in the presence of glutamine and ATP through an activated phospho-Asp-tRNA(Asn) or phospho-Glu-tRNA(Gln). The chain is Aspartyl/glutamyl-tRNA(Asn/Gln) amidotransferase subunit C from Salinibacter ruber (strain DSM 13855 / M31).